The chain runs to 816 residues: Probable transcriptional regulator SLK2 (816 aa).

Disordered regions lie at residues 133 to 153 (HDPS…SQTN) and 166 to 189 (SFFQ…KQDD). Polar residues-rich tracts occupy residues 139-153 (LGGS…SQTN) and 166-176 (SFFQDPNNLTQ). The tract at residues 307–554 (PSESSIVYWR…DQKVGPIEAL (248 aa)) is dimerization. The Nuclear localization signal motif lies at 316-330 (RKFVTEYFSPRAKKR). Composition is skewed to polar residues over residues 644-662 (IQQE…QGTS) and 672-711 (PSIS…SGNQ). The interval 644 to 711 (IQQEPSRNRS…QPPSCSSGNQ (68 aa)) is disordered.

Belongs to the adn1/SEU family. As to quaternary structure, forms corepressor complexes with LUH; LUH is the transcription repressor subunit and SLK2 the specific DNA-binding adapters. As to expression, expressed in young flower meristems, ovules and the carpel margin meristem.

The protein resides in the nucleus. Its function is as follows. Probable transcription regulator that functions in the development of the carpel margin meristem similarly to SEUSS (SEU). In association with SEU, supports organ development from meristematic regions by facilitating auxin response and thus organ initiation, and by sustaining meristematic potential through the maintenance of PHABULOSA expression. DNA-binding adapter subunit of the SEU-SLK2 transcriptional corepressor of abiotic stress (e.g. salt and osmotic stress) response genes. The protein is Probable transcriptional regulator SLK2 (SLK2) of Arabidopsis thaliana (Mouse-ear cress).